The primary structure comprises 738 residues: Junction plakoglobin (738 aa).

ARM repeat units lie at residues 128 to 167 (NYQD…QLSK), 168 to 211 (KEAS…LSHH), 212 to 251 (REGL…NLLL), 254 to 293 (EGAK…LLAY), 294 to 337 (GNQE…LSVC), 338 to 377 (PSNK…NLSD), 379 to 416 (ATKQ…NLTC), 419 to 460 (GRNK…HLTS), 466 to 506 (EVAQ…NLAL), 508 to 547 (PANH…QPYT), 570 to 609 (PVNR…ELAQ), and 611 to 657 (KEAA…ADYR).

It belongs to the beta-catenin family. In terms of assembly, homodimer.

Its subcellular location is the cell junction. The protein resides in the adherens junction. The protein localises to the desmosome. It is found in the cytoplasm. It localises to the cytoskeleton. Its subcellular location is the membrane. Its function is as follows. Common junctional plaque protein. The membrane-associated plaques are architectural elements in an important strategic position to influence the arrangement and function of both the cytoskeleton and the cells within the tissue. The presence of plakoglobin in both the desmosomes and in the intermediate junctions suggests that it plays a central role in the structure and function of submembranous plaques. In Xenopus laevis (African clawed frog), this protein is Junction plakoglobin (jup).